The primary structure comprises 468 residues: ATP synthase subunit beta (468 aa).

An ATP-binding site is contributed by 155–162; the sequence is GGAGVGKT.

It belongs to the ATPase alpha/beta chains family. In terms of assembly, F-type ATPases have 2 components, CF(1) - the catalytic core - and CF(0) - the membrane proton channel. CF(1) has five subunits: alpha(3), beta(3), gamma(1), delta(1), epsilon(1). CF(0) has three main subunits: a(1), b(2) and c(9-12). The alpha and beta chains form an alternating ring which encloses part of the gamma chain. CF(1) is attached to CF(0) by a central stalk formed by the gamma and epsilon chains, while a peripheral stalk is formed by the delta and b chains.

It is found in the cell membrane. It carries out the reaction ATP + H2O + 4 H(+)(in) = ADP + phosphate + 5 H(+)(out). Its function is as follows. Produces ATP from ADP in the presence of a proton gradient across the membrane. The catalytic sites are hosted primarily by the beta subunits. This is ATP synthase subunit beta from Bacillus cereus (strain B4264).